The sequence spans 214 residues: Soluble inorganic pyrophosphatase (214 aa).

The segment at 1-20 is disordered; that stretch reads MSEEDKTAASAEQPKRAPKL. Positions 64, 78, and 90 each coordinate substrate. Residues aspartate 100, aspartate 105, and aspartate 137 each coordinate Mg(2+). Residue tyrosine 174 participates in substrate binding.

The protein belongs to the PPase family. Mg(2+) is required as a cofactor.

It is found in the cytoplasm. The catalysed reaction is diphosphate + H2O = 2 phosphate + H(+). In Zea mays (Maize), this protein is Soluble inorganic pyrophosphatase (IPP).